The primary structure comprises 154 residues: D-aminoacyl-tRNA deacylase (154 aa).

The short motif at 142–143 (GP) is the Gly-cisPro motif, important for rejection of L-amino acids element.

It belongs to the DTD family. As to quaternary structure, homodimer.

It localises to the cytoplasm. The catalysed reaction is glycyl-tRNA(Ala) + H2O = tRNA(Ala) + glycine + H(+). It carries out the reaction a D-aminoacyl-tRNA + H2O = a tRNA + a D-alpha-amino acid + H(+). An aminoacyl-tRNA editing enzyme that deacylates mischarged D-aminoacyl-tRNAs. Also deacylates mischarged glycyl-tRNA(Ala), protecting cells against glycine mischarging by AlaRS. Acts via tRNA-based rather than protein-based catalysis; rejects L-amino acids rather than detecting D-amino acids in the active site. By recycling D-aminoacyl-tRNA to D-amino acids and free tRNA molecules, this enzyme counteracts the toxicity associated with the formation of D-aminoacyl-tRNA entities in vivo and helps enforce protein L-homochirality. The sequence is that of D-aminoacyl-tRNA deacylase from Acidovorax sp. (strain JS42).